The chain runs to 392 residues: Autophagy-related protein 21 (392 aa).

WD repeat units follow at residues 200-240 (VHQS…NDEP) and 250-289 (SRPSRISEMKFNHDNTLLACVGESDTIHIFALPVTTTEAD). Positions 246–250 (FRRGS) match the L/FRRG motif motif.

Belongs to the WD repeat PROPPIN family.

The protein resides in the cytoplasm. It is found in the membrane. Its subcellular location is the vacuole membrane. In terms of biological role, required for cytoplasm to vacuole transport (Cvt) vesicles formation and mitophagy. Involved in binding of phosphatidylethanolamine to ATG8 and in recruitment of ATG8 and ATG5 to the pre-autophagosomal structure. Protects ATG8 from ARG4-mediated cleavage. This is Autophagy-related protein 21 (ATG21) from Kluyveromyces lactis (strain ATCC 8585 / CBS 2359 / DSM 70799 / NBRC 1267 / NRRL Y-1140 / WM37) (Yeast).